Here is a 311-residue protein sequence, read N- to C-terminus: Ketoisovalerate oxidoreductase subunit VorB (311 aa).

Heterotetramer of one alpha, one beta, one delta and one gamma chain.

The catalysed reaction is 3-methyl-2-oxobutanoate + 2 oxidized [2Fe-2S]-[ferredoxin] + CoA = 2-methylpropanoyl-CoA + 2 reduced [2Fe-2S]-[ferredoxin] + CO2 + H(+). The sequence is that of Ketoisovalerate oxidoreductase subunit VorB (vorB) from Pyrococcus abyssi (strain GE5 / Orsay).